A 760-amino-acid polypeptide reads, in one-letter code: Serine/threonine-protein kinase dkf-1 (760 aa).

2 Phorbol-ester/DAG-type zinc fingers span residues 103–153 (PHVV…GIIV) and 194–244 (PHTL…PSNC). The PH domain maps to 316-444 (KNLEGWMIHF…QFIKESLQPP (129 aa)). In terms of domain architecture, Protein kinase spans 464 to 725 (VLSDKTLGSG…IEKCLEHGWL (262 aa)). Residues 470–478 (LGSGQFGTV) and Lys493 each bind ATP. The active-site Proton acceptor is Asp589. Thr626 carries the phosphothreonine modification.

The protein belongs to the protein kinase superfamily. CAMK Ser/Thr protein kinase family. PKD subfamily. Mg(2+) serves as cofactor. In terms of processing, prolonged phosphorylation at Thr-626 results in ubiquitination and degradation.

Its subcellular location is the cytoplasm. The protein resides in the membrane. It catalyses the reaction L-seryl-[protein] + ATP = O-phospho-L-seryl-[protein] + ADP + H(+). It carries out the reaction L-threonyl-[protein] + ATP = O-phospho-L-threonyl-[protein] + ADP + H(+). With respect to regulation, activated by DAG and phorbol esters. Phorbol-ester/DAG-type domain 1 binds phorbol ester with high affinity and mediates accumulation at the cell periphery. Phorbol-ester/DAG-type domain 2 binds phorbol ester with low affinity but may mediate initial contact, resulting in a conformational change allowing previously occluded domain 1 to anchor the kinase. Phosphorylation on Thr-626 is then also required for activation and may also result in a further conformational change. Functionally, converts transient diacylglycerol (DAG) signals into prolonged physiological effects, independently of PKC. Role in the regulation of growth and neuromuscular control of movement. Involved in immune response to S.aureus bacterium by activating transcription factor hlh-30 downstream of phospholipase plc-1. This chain is Serine/threonine-protein kinase dkf-1, found in Caenorhabditis briggsae.